We begin with the raw amino-acid sequence, 448 residues long: Ribulose bisphosphate carboxylase large chain (448 aa).

The propeptide occupies 1–2 (MS). P3 is subject to N-acetylproline. K14 is subject to N6,N6,N6-trimethyllysine. Residues N122 and T172 each contribute to the substrate site. K174 (proton acceptor) is an active-site residue. Residue K176 coordinates substrate. 3 residues coordinate Mg(2+): K200, D202, and E203. K200 bears the N6-carboxylysine mark. H293 acts as the Proton acceptor in catalysis. Substrate is bound by residues R294, H326, and S378.

It belongs to the RuBisCO large chain family. Type I subfamily. As to quaternary structure, heterohexadecamer of 8 large chains and 8 small chains; disulfide-linked. The disulfide link is formed within the large subunit homodimers. Mg(2+) is required as a cofactor. The disulfide bond which can form in the large chain dimeric partners within the hexadecamer appears to be associated with oxidative stress and protein turnover.

The protein localises to the plastid. Its subcellular location is the chloroplast. It carries out the reaction 2 (2R)-3-phosphoglycerate + 2 H(+) = D-ribulose 1,5-bisphosphate + CO2 + H2O. It catalyses the reaction D-ribulose 1,5-bisphosphate + O2 = 2-phosphoglycolate + (2R)-3-phosphoglycerate + 2 H(+). In terms of biological role, ruBisCO catalyzes two reactions: the carboxylation of D-ribulose 1,5-bisphosphate, the primary event in carbon dioxide fixation, as well as the oxidative fragmentation of the pentose substrate in the photorespiration process. Both reactions occur simultaneously and in competition at the same active site. This chain is Ribulose bisphosphate carboxylase large chain, found in Dichapetalum crassifolium.